Consider the following 137-residue polypeptide: Large ribosomal subunit protein uL16 (137 aa).

The segment covering 1-14 (MLQPNRRKFRKEHK) has biased composition (basic residues). Residues 1 to 22 (MLQPNRRKFRKEHKGRNEGLAT) are disordered.

Belongs to the universal ribosomal protein uL16 family. As to quaternary structure, part of the 50S ribosomal subunit.

In terms of biological role, binds 23S rRNA and is also seen to make contacts with the A and possibly P site tRNAs. This is Large ribosomal subunit protein uL16 from Dechloromonas aromatica (strain RCB).